The following is an 827-amino-acid chain: Periplasmic nitrate reductase (827 aa).

Residues 1–32 (MELNRRDFMKANAAMAAAAAAGMTIPVKNVYA) constitute a signal peptide (tat-type signal). The 4Fe-4S Mo/W bis-MGD-type domain occupies 37 to 93 (IRWDKAPCRFCGTGCSVLVGTKDGRVVATQGDPDAEVNRGLNCIKGYFLSKIMYGAD). The [4Fe-4S] cluster site is built by cysteine 44, cysteine 47, cysteine 51, and cysteine 79. Mo-bis(molybdopterin guanine dinucleotide) is bound by residues lysine 81, glutamine 148, asparagine 173, cysteine 177, 210-217 (WGSNMAEM), 241-245 (STFEH), methionine 371, glutamine 375, asparagine 481, 507-508 (SD), lysine 530, aspartate 557, and 717-726 (TGRVLEHWHT). Phenylalanine 793 contributes to the substrate binding site. Mo-bis(molybdopterin guanine dinucleotide) is bound by residues asparagine 801 and lysine 818.

The protein belongs to the prokaryotic molybdopterin-containing oxidoreductase family. NasA/NapA/NarB subfamily. As to quaternary structure, component of the periplasmic nitrate reductase NapAB complex composed of NapA and NapB. Requires [4Fe-4S] cluster as cofactor. Mo-bis(molybdopterin guanine dinucleotide) serves as cofactor. Predicted to be exported by the Tat system. The position of the signal peptide cleavage has not been experimentally proven.

Its subcellular location is the periplasm. The enzyme catalyses 2 Fe(II)-[cytochrome] + nitrate + 2 H(+) = 2 Fe(III)-[cytochrome] + nitrite + H2O. Functionally, catalytic subunit of the periplasmic nitrate reductase complex NapAB. Receives electrons from NapB and catalyzes the reduction of nitrate to nitrite. In Actinobacillus pleuropneumoniae serotype 7 (strain AP76), this protein is Periplasmic nitrate reductase.